The chain runs to 496 residues: Hemophilin secretion modulator (496 aa).

The signal sequence occupies residues 1-19 (MKRTLLCCLTLLSCPFLYA). The next 14 beta stranded transmembrane spans lie at 198–208 (WQGSVSAGYTY), 253–263 (DYEASLIKRYA), 268–277 (HGVALRALAF), 291–301 (TININAGYSYF), 305–315 (NQIGVSPLFEH), 327–337 (WGARAEWMHFI), 341–351 (KAFKLEAESKD), 365–374 (SSAFATFWKI), 380–389 (TFFGGLDVLD), 403–413 (QGVRLGLSKSW), 418–427 (NTTLLSSYRW), 446–455 (QNHTFVVQMP), 462–472 (MTPNLTYRYNH), and 486–495 (HNISFKLEHR).

It belongs to the Slam family.

Its subcellular location is the cell outer membrane. Its function is as follows. Part of a high affinity heme acquisition system. Mediates the secretion of the hemophilin HphA across the outer membrane into the extracellular environment. Plays a supporting role for full virulence. This chain is Hemophilin secretion modulator, found in Acinetobacter baumannii.